A 396-amino-acid chain; its full sequence is Elongation factor Tu (396 aa).

The 196-residue stretch at 10–205 (KPHVNIGTIG…AVDESIPAPV (196 aa)) folds into the tr-type G domain. The tract at residues 19–26 (GHVDHGKT) is G1. A GTP-binding site is contributed by 19–26 (GHVDHGKT). Thr-26 provides a ligand contact to Mg(2+). Residues 62 to 66 (GITIN) form a G2 region. The tract at residues 83–86 (DAPG) is G3. Residues 83-87 (DAPGH) and 138-141 (NKSD) each bind GTP. The tract at residues 138–141 (NKSD) is G4. The tract at residues 175–177 (SAL) is G5.

The protein belongs to the TRAFAC class translation factor GTPase superfamily. Classic translation factor GTPase family. EF-Tu/EF-1A subfamily. As to quaternary structure, monomer.

Its subcellular location is the cytoplasm. It carries out the reaction GTP + H2O = GDP + phosphate + H(+). Functionally, GTP hydrolase that promotes the GTP-dependent binding of aminoacyl-tRNA to the A-site of ribosomes during protein biosynthesis. The polypeptide is Elongation factor Tu (Mycobacterium leprae (strain Br4923)).